A 560-amino-acid polypeptide reads, in one-letter code: MDVTAIFAGDILVQSREYLIPNDVVDVDGGIKAVRPPIIQPPPGRKLPLIDFPGSSWDFLTYFAPSKTVKRQSSSSSDNTSDKEEVETEETRGMFVQLGDTAHEACPFATNEADSSSTVSIISPSYASRGSIVPSWLKRKFLGRVSLGFVYEGSSGSSVGSESTCSLMTPSLEFPDRISFRKKDFSEKGPSRHVWEKRKLTRAKLIENFCNPEDIEPVTSWLKGQLLGEESFASVYEAISDSSVGSESTCSLMTPSMEFPDRISFRKRDFSEEGPSGRVKEKRKLMRNKLIENFRKPEDITSWLKGQLLGRGSYASVYEAISEDGDFFAVKEVSLLDKGIQAQECIQQLEGEIALLSQLQHQNIVRYRGTAKDVSKLYIFLELVTQGSVQKLYERYQLSYTVVSLYTRQILAGLNYLHDKGFVHRDIKCANMLVDANGTVKLADFGLAEASKFNDIMSCKGTLFWMAPEVINRKDSDGNGSPADIWSLGCTVLEMCTGQIPYSDLKPIQAAFKIGRGTLPDVPDTLSLDARHFILTCLKVNPEERPTAAELLHHPFVINL.

The tract at residues 70–91 is disordered; sequence KRQSSSSSDNTSDKEEVETEET. One can recognise a Protein kinase domain in the interval 303–557; sequence WLKGQLLGRG…AAELLHHPFV (255 aa). ATP-binding positions include 309-317 and Lys331; that span reads LGRGSYASV. The active-site Proton acceptor is Asp426.

The protein belongs to the protein kinase superfamily. STE Ser/Thr protein kinase family. MAP kinase kinase kinase subfamily. In terms of tissue distribution, expressed at low levels in roots, stems, siliques, leaves, seedlings and flower buds.

It catalyses the reaction L-seryl-[protein] + ATP = O-phospho-L-seryl-[protein] + ADP + H(+). It carries out the reaction L-threonyl-[protein] + ATP = O-phospho-L-threonyl-[protein] + ADP + H(+). The polypeptide is Mitogen-activated protein kinase kinase kinase 3 (Arabidopsis thaliana (Mouse-ear cress)).